A 293-amino-acid polypeptide reads, in one-letter code: 33 kDa chaperonin (293 aa).

Cystine bridges form between C238–C240 and C271–C274.

Belongs to the HSP33 family. In terms of processing, under oxidizing conditions two disulfide bonds are formed involving the reactive cysteines. Under reducing conditions zinc is bound to the reactive cysteines and the protein is inactive.

It localises to the cytoplasm. Redox regulated molecular chaperone. Protects both thermally unfolding and oxidatively damaged proteins from irreversible aggregation. Plays an important role in the bacterial defense system toward oxidative stress. In Staphylococcus aureus (strain Mu3 / ATCC 700698), this protein is 33 kDa chaperonin.